Reading from the N-terminus, the 125-residue chain is Cystatin-like cysteine protease inhibitor EPIC2B (125 aa).

Residues 1–21 form the signal peptide; it reads MSFLRPTLALLAVTALVTTSG. N-linked (GlcNAc...) asparagine glycosylation is present at Asn45. The Secondary area of contact motif lies at 68–72; the sequence is QVVSG.

The protein belongs to the cystatin family. Interacts with the host papain-like cysteine protease PIP1. Interacts with the host papain-like cysteine protease RCR3. Interacts with the host papain-like cysteine protease C14.

The protein resides in the secreted. Functionally, secreted effector that interacts with and inhibits the pathogenesis-related papain-like cysteine proteases C14, PIP1 and RCR3 of host plants. Inhibition of host proteases by a pathogen extracellular protease inhibitor forms a specific type of defense-counterdefense mechanism between plants and microbial pathogens. The chain is Cystatin-like cysteine protease inhibitor EPIC2B from Phytophthora infestans (Potato late blight agent).